Here is a 397-residue protein sequence, read N- to C-terminus: Argininosuccinate synthase (397 aa).

Position 9 to 17 (9 to 17 (AYSGGLDTS)) interacts with ATP. Tyr-87 is an L-citrulline binding site. Gly-117 lines the ATP pocket. L-aspartate-binding residues include Thr-119, Asn-123, and Asp-124. Residue Asn-123 participates in L-citrulline binding. Positions 127, 175, 184, 257, and 269 each coordinate L-citrulline.

Belongs to the argininosuccinate synthase family. Type 1 subfamily. In terms of assembly, homotetramer.

Its subcellular location is the cytoplasm. It catalyses the reaction L-citrulline + L-aspartate + ATP = 2-(N(omega)-L-arginino)succinate + AMP + diphosphate + H(+). It functions in the pathway amino-acid biosynthesis; L-arginine biosynthesis; L-arginine from L-ornithine and carbamoyl phosphate: step 2/3. The protein is Argininosuccinate synthase of Dictyoglomus thermophilum (strain ATCC 35947 / DSM 3960 / H-6-12).